A 29-amino-acid polypeptide reads, in one-letter code: GKPICGETCAKGKCYTPKCTCNWPICYKN.

Positions 1–29 form a cross-link, cyclopeptide (Gly-Asn); sequence GKPICGETCAKGKCYTPKCTCNWPICYKN. 3 cysteine pairs are disulfide-bonded: Cys-5–Cys-19, Cys-9–Cys-21, and Cys-14–Cys-26.

It belongs to the cyclotide family. In terms of processing, this is a cyclic peptide.

Functionally, probably participates in a plant defense mechanism. This chain is Cyclotide mobo-B, found in Melicytus obovatus (Hymenanthera obovata).